The sequence spans 402 residues: MSSRVHKVVLAYSGGLDTSIIVPWLKQNYGNPEVICYCANIGQDDELSGLEAKAIATGASKCYVEDLREEFVRDFLFPLLQSGAVYERTYLLGTSVARPLIARRQAEIALQEGADALAHGCTGKGNDQVRFELTYMAFAPHLKVIAPWREWNIRSREDALDYAAEHNVPVTATLKSIYSRDRNIWHMSHEGGILEDPWQEPEEAMYTLTTAPEAAPDEPEYVTVGFDQGVPVSVNGERLGPVDLLLALNNIGAKHGIGRVDLVENRLVGMKSHGVYETPGGTILRVAHQGLEQLALDRDTLHYKDVIAHRYAELVYYGQWYTPLREALDAFVRVTQRNVTGEARLKLYKGNAMLVGRRAAKSLYNPDIASFTMSDSYNQKDAEGFIKIFGLPVKVQALLEGR.

ATP contacts are provided by residues 11–19 and Ala39; that span reads AYSGGLDTS. L-citrulline-binding residues include Tyr90 and Ser95. Residue Gly120 participates in ATP binding. L-aspartate is bound by residues Thr122, Asn126, and Asp127. Asn126 contacts L-citrulline. L-citrulline contacts are provided by Arg130, Ser179, Ser188, Glu264, and Tyr276.

It belongs to the argininosuccinate synthase family. Type 1 subfamily. Homotetramer.

It localises to the cytoplasm. It catalyses the reaction L-citrulline + L-aspartate + ATP = 2-(N(omega)-L-arginino)succinate + AMP + diphosphate + H(+). It functions in the pathway amino-acid biosynthesis; L-arginine biosynthesis; L-arginine from L-ornithine and carbamoyl phosphate: step 2/3. This chain is Argininosuccinate synthase, found in Roseiflexus castenholzii (strain DSM 13941 / HLO8).